The chain runs to 376 residues: MSDLVTKFESLIISKYPVSFTKEQSAQAAQWESVLKSGQIQPHLDQLNLVLRDNTFIVSTLYPTSTDVHVFEVALPLIKDLVASSKDVKSTYTTYRHILRWIDYMQNLLEVSSTDKLEINHDLDLPHEVIEKKKKAPAGGAADAAAKADEDVSKKAKKQDHPRGKPDEETLKKLREEAKAKKAAKKAANAKQQQEQQNKAPEKPKPSAIDFRVGFIQKAIKHPDADSLYVSTIDVGDEEGPRTVCSGLVKHFPLDAMQERYVVVVCNLKPVNMRGIKSTAMVLCGSNDDKVEFVEPPKDSKAGDKVFFEGFGDEAPMKQLNPKKKIWEHLQPHFTTNDGLEVIFKDEEEKDHPVRKLTNAKGESFKVASIANAQVR.

Residues 22-46 (KEQSAQAAQWESVLKSGQIQPHLDQ) form an interaction with methionyl-tRNA synthetase MES1 region. Interaction with glutamyl-tRNA synthetase GUS1 stretches follow at residues 52–61 (RDNTFIVSTL) and 91–121 (TYTT…EINH). Residues 133-206 (KKKAPAGGAA…QNKAPEKPKP (74 aa)) form a disordered region. Positions 146–180 (AKADEDVSKKAKKQDHPRGKPDEETLKKLREEAKA) are enriched in basic and acidic residues. The segment covering 186-199 (KAANAKQQQEQQNK) has biased composition (low complexity). In terms of domain architecture, tRNA-binding spans 205–307 (KPSAIDFRVG…KDSKAGDKVF (103 aa)).

This sequence belongs to the tRNA-aminoacylation cofactor ARC1 family. As to quaternary structure, component of a yeast aminoacyl-tRNA synthase (aaRS) complex formed by methionyl-tRNA synthase MES1, glutamyl-tRNA synthase GUS1 and the tRNA aminoacylation cofactor ARC1 in a stoichiometric complex. Interacts (via N-ter) with MES1 (via N-ter) and GUS1 (via N-ter). Can also form a stable binary complex with either MES1 or GUS1 that is functional in terms of aminoacylation.

The protein localises to the cytoplasm. Its function is as follows. Binds to tRNA and functions as a cofactor for the methionyl-tRNA synthetase (MetRS) and glutamyl-tRNA synthetase (GluRS). Forms a complex with MetRS and GluRS and increases their affinity for cognate tRNAs due to the presence of a tRNA binding domain in its middle and C-terminal part. Binds specifically G4 quadruplex nucleic acid structures (these are four-stranded right-handed helices, stabilized by guanine base quartets). Also required for cytoplasmic confinement of the synthetases and tRNA. The protein is tRNA-aminoacylation cofactor ARC1 (ARC1) of Saccharomyces cerevisiae (strain ATCC 204508 / S288c) (Baker's yeast).